A 432-amino-acid polypeptide reads, in one-letter code: 3-phosphoshikimate 1-carboxyvinyltransferase (432 aa).

The 3-phosphoshikimate site is built by Lys23, Ser24, and Arg28. Lys23 serves as a coordination point for phosphoenolpyruvate. Residues Gly95 and Arg123 each contribute to the phosphoenolpyruvate site. 3-phosphoshikimate is bound by residues Ser166, Gln168, Asp315, and Lys342. Gln168 is a phosphoenolpyruvate binding site. Asp315 serves as the catalytic Proton acceptor. Phosphoenolpyruvate is bound by residues Arg346 and Arg390.

Belongs to the EPSP synthase family. In terms of assembly, monomer.

It is found in the cytoplasm. The enzyme catalyses 3-phosphoshikimate + phosphoenolpyruvate = 5-O-(1-carboxyvinyl)-3-phosphoshikimate + phosphate. The protein operates within metabolic intermediate biosynthesis; chorismate biosynthesis; chorismate from D-erythrose 4-phosphate and phosphoenolpyruvate: step 6/7. Catalyzes the transfer of the enolpyruvyl moiety of phosphoenolpyruvate (PEP) to the 5-hydroxyl of shikimate-3-phosphate (S3P) to produce enolpyruvyl shikimate-3-phosphate and inorganic phosphate. This chain is 3-phosphoshikimate 1-carboxyvinyltransferase, found in Lactiplantibacillus plantarum (strain ATCC BAA-793 / NCIMB 8826 / WCFS1) (Lactobacillus plantarum).